Consider the following 706-residue polypeptide: Elongation factor G (706 aa).

Residues 8–295 enclose the tr-type G domain; that stretch reads ERYRNFGIMA…AVIDYLPSPL (288 aa). GTP is bound by residues 17–24, 92–96, and 146–149; these read AHIDAGKT, DTPGH, and NKMD.

It belongs to the TRAFAC class translation factor GTPase superfamily. Classic translation factor GTPase family. EF-G/EF-2 subfamily.

Its subcellular location is the cytoplasm. Its function is as follows. Catalyzes the GTP-dependent ribosomal translocation step during translation elongation. During this step, the ribosome changes from the pre-translocational (PRE) to the post-translocational (POST) state as the newly formed A-site-bound peptidyl-tRNA and P-site-bound deacylated tRNA move to the P and E sites, respectively. Catalyzes the coordinated movement of the two tRNA molecules, the mRNA and conformational changes in the ribosome. The polypeptide is Elongation factor G (Jannaschia sp. (strain CCS1)).